Here is a 295-residue protein sequence, read N- to C-terminus: Ribosomal protein L11 methyltransferase (295 aa).

The S-adenosyl-L-methionine site is built by Thr146, Gly167, Asp189, and Asn231.

The protein belongs to the methyltransferase superfamily. PrmA family.

Its subcellular location is the cytoplasm. The enzyme catalyses L-lysyl-[protein] + 3 S-adenosyl-L-methionine = N(6),N(6),N(6)-trimethyl-L-lysyl-[protein] + 3 S-adenosyl-L-homocysteine + 3 H(+). Functionally, methylates ribosomal protein L11. This Vibrio campbellii (strain ATCC BAA-1116) protein is Ribosomal protein L11 methyltransferase.